The chain runs to 1769 residues: Gamma-tubulin complex component 6 (1769 aa).

Disordered regions lie at residues E809 to D842, S859 to T881, and T1284 to R1360. The segment covering F820 to G831 has biased composition (polar residues). The segment covering P1314–E1326 has biased composition (basic and acidic residues). The segment covering L1332–P1343 has biased composition (polar residues).

It belongs to the TUBGCP family. Component of the gamma-tubulin ring complex (gTuRC) consisting of TUBGCP2, TUBGCP3, TUBGCP4, TUBGCP5 and TUBGCP6 and gamma-tubulin TUBG1 or TUBG2. TUBGCP2, TUBGCP3, TUBGCP4, TUBGCP5 and TUBGCP6 assemble in a 5:5:2:1:1 stoichiometry; each is associated with a gamma-tubulin, thereby arranging 14 gamma-tubulins in a helical manner. Gamma-tubulin at the first position is blocked by TUBGCP3 at the last position, allowing 13 protafilaments to grow into a microtubule. The gTuRC (via TUBGCP3 and TUBGCP6) interacts with ACTB and MZT1; the interactions form a luminal bridge that stabilizes the initial structure during complex assembly. The gTuRC (via TUBGCP2) interacts with MZT2A/MZT2B and CDK5RAP2 (via CM1 motif); the interactions play a role in gTuRC activation.

The protein localises to the cytoplasm. Its subcellular location is the cytoskeleton. It localises to the microtubule organizing center. It is found in the centrosome. In terms of biological role, component of the gamma-tubulin ring complex (gTuRC) which mediates microtubule nucleation. The gTuRC regulates the minus-end nucleation of alpha-beta tubulin heterodimers that grow into microtubule protafilaments, a critical step in centrosome duplication and spindle formation. The protein is Gamma-tubulin complex component 6 (Tubgcp6) of Mus musculus (Mouse).